We begin with the raw amino-acid sequence, 286 residues long: F-box/SPRY domain-containing protein 1 (286 aa).

At A2 the chain carries N-acetylalanine. Residues 33-82 enclose the F-box domain; that stretch reads SGVGGRLPSRVLELVFSYLELSELRSCALVCKHWYRCLHGDENSEVWRSL. The B30.2/SPRY domain maps to 92–284; it reads LRTDILCNLP…VTLVYLGKPL (193 aa).

Belongs to the FBXO45/Fsn family. In terms of assembly, forms a complex with MYCBP2 and SKP1. Interacts with HEY1; leading to FBXO45 nuclear translocation. Interacts (via SPRY domain) with CDH2. In terms of tissue distribution, expressed speciffically in the central nervous system, including cerebellum, medulla oblongata, olfactory bulb, hippocampus, cortex and brain stem.

The protein resides in the secreted. The protein localises to the postsynaptic cell membrane. It localises to the presynaptic cell membrane. It is found in the nucleus. It participates in protein modification; protein ubiquitination. In terms of biological role, component of E3 ubiquitin ligase complex consisting of FBXO45, MYCBP2 and SKP1. Functions in substrate recognition but plays also an important role in assembly of the complex. Required for normal neuromuscular synaptogenesis, axon pathfinding and neuronal migration. Regulates neuron migration during brain development through interaction with N-cadherin/CDH2 after secretion via a non-classical mechanism. Plays a role in the regulation of neurotransmission at mature neurons. May control synaptic activity by controlling UNC13A via ubiquitin dependent pathway. Specifically recognizes TP73, promoting its ubiquitination and degradation. Polyubiquitinates NMNAT2, an adenylyltransferase that acts as an axon maintenance factor, and regulates its stability and degradation by the proteasome. Acts also by ubiquitinating FBXW7 during prolonged mitotic arrest and promotes FBXW7 proteasomal degradation. Induces subsequently an increase in mitotic slippage and prevents mitotic cell death. In response to influenza infection, mediates interferon-lambda receptor IFNLR1 polyubiquitination and degradation through the ubiquitin-proteasome system by docking with its intracellular receptor domain. This Mus musculus (Mouse) protein is F-box/SPRY domain-containing protein 1.